The primary structure comprises 41 residues: Photosystem II reaction center protein L (41 aa).

Residues 20–40 (LFLGLLLVFVLGILSPATSLT) traverse the membrane as a helical segment.

This sequence belongs to the PsbL family. As to quaternary structure, PSII is composed of 1 copy each of membrane proteins PsbA, PsbB, PsbC, PsbD, PsbE, PsbF, PsbH, PsbI, PsbJ, PsbK, PsbL, PsbM, PsbT, PsbX, PsbY, PsbZ, Psb30/Ycf12, peripheral proteins PsbO, CyanoQ (PsbQ), PsbU, PsbV and a large number of cofactors. It forms dimeric complexes.

It is found in the cellular thylakoid membrane. One of the components of the core complex of photosystem II (PSII). PSII is a light-driven water:plastoquinone oxidoreductase that uses light energy to abstract electrons from H(2)O, generating O(2) and a proton gradient subsequently used for ATP formation. It consists of a core antenna complex that captures photons, and an electron transfer chain that converts photonic excitation into a charge separation. This subunit is found at the monomer-monomer interface and is required for correct PSII assembly and/or dimerization. The protein is Photosystem II reaction center protein L of Synechococcus sp. (strain ATCC 27144 / PCC 6301 / SAUG 1402/1) (Anacystis nidulans).